Reading from the N-terminus, the 120-residue chain is NAD(P)H-quinone oxidoreductase subunit 3, chloroplastic (120 aa).

3 helical membrane passes run 10–30, 64–84, and 88–108; these read FWAF…ISGV, MFAL…PWAM, and VLGV…IGGL.

It belongs to the complex I subunit 3 family. In terms of assembly, NDH is composed of at least 16 different subunits, 5 of which are encoded in the nucleus.

It localises to the plastid. The protein resides in the chloroplast thylakoid membrane. The catalysed reaction is a plastoquinone + NADH + (n+1) H(+)(in) = a plastoquinol + NAD(+) + n H(+)(out). The enzyme catalyses a plastoquinone + NADPH + (n+1) H(+)(in) = a plastoquinol + NADP(+) + n H(+)(out). Functionally, NDH shuttles electrons from NAD(P)H:plastoquinone, via FMN and iron-sulfur (Fe-S) centers, to quinones in the photosynthetic chain and possibly in a chloroplast respiratory chain. The immediate electron acceptor for the enzyme in this species is believed to be plastoquinone. Couples the redox reaction to proton translocation, and thus conserves the redox energy in a proton gradient. The sequence is that of NAD(P)H-quinone oxidoreductase subunit 3, chloroplastic from Ipomoea purpurea (Common morning glory).